A 202-amino-acid chain; its full sequence is Nascent polypeptide-associated complex subunit alpha (202 aa).

The span at 1–19 shows a compositional bias: basic and acidic residues; it reads MADPRVEELPDEEVPKTNV. The disordered stretch occupies residues 1–42; the sequence is MADPRVEELPDEEVPKTNVEDAGSSSESEAGDEPTIPGGAAV. In terms of domain architecture, NAC-A/B spans 46–111; that stretch reads SRNEKKARKA…AKIEDLNATA (66 aa). Residues 117-126 show a composition bias toward low complexity; it reads QQLAEAAANE. The tract at residues 117 to 165 is disordered; that stretch reads QQLAEAAANEHAGHDHEHDHGKGKAPEAEAKKEEEEDDGEEVDESGLEA. Residues 127–149 show a composition bias toward basic and acidic residues; it reads HAGHDHEHDHGKGKAPEAEAKKE. Positions 150-162 are enriched in acidic residues; sequence EEEDDGEEVDESG. The UBA domain occupies 163 to 202; that stretch reads LEAKDIELVMAQANVSRKKAVKALRENDNDIVNSIMALSI.

This sequence belongs to the NAC-alpha family. In terms of assembly, part of the nascent polypeptide-associated complex (NAC), consisting of egd2 and egd1. NAC associates with ribosomes via egd1.

It is found in the cytoplasm. It localises to the nucleus. Its function is as follows. Component of the nascent polypeptide-associated complex (NAC), a dynamic component of the ribosomal exit tunnel, protecting the emerging polypeptides from interaction with other cytoplasmic proteins to ensure appropriate nascent protein targeting. The NAC complex also promotes mitochondrial protein import by enhancing productive ribosome interactions with the outer mitochondrial membrane and blocks the inappropriate interaction of ribosomes translating non-secretory nascent polypeptides with translocation sites in the membrane of the endoplasmic reticulum. Egd2 may also be involved in transcription regulation. In Aspergillus niger (strain ATCC MYA-4892 / CBS 513.88 / FGSC A1513), this protein is Nascent polypeptide-associated complex subunit alpha (egd2).